The chain runs to 240 residues: Probable alpha-aspartyl dipeptidase (240 aa).

Residues Ser-125, Asp-140, and His-162 each act as charge relay system in the active site.

The protein belongs to the peptidase S51 family.

The protein localises to the cytoplasm. The catalysed reaction is Dipeptidase E catalyzes the hydrolysis of dipeptides Asp-|-Xaa. It does not act on peptides with N-terminal Glu, Asn or Gln, nor does it cleave isoaspartyl peptides.. In terms of biological role, hydrolyzes dipeptides containing N-terminal aspartate residues. This chain is Probable alpha-aspartyl dipeptidase, found in Drosophila melanogaster (Fruit fly).